A 149-amino-acid polypeptide reads, in one-letter code: Cell division protein SepF (149 aa).

This sequence belongs to the SepF family. Homodimer. Interacts with FtsZ.

The protein localises to the cytoplasm. Functionally, cell division protein that is part of the divisome complex and is recruited early to the Z-ring. Probably stimulates Z-ring formation, perhaps through the cross-linking of FtsZ protofilaments. Its function overlaps with FtsA. This is Cell division protein SepF from Clostridium perfringens (strain ATCC 13124 / DSM 756 / JCM 1290 / NCIMB 6125 / NCTC 8237 / Type A).